Here is a 336-residue protein sequence, read N- to C-terminus: Tetraacyldisaccharide 4'-kinase (336 aa).

Position 60–67 (60–67 (TVGGTGKT)) interacts with ATP.

Belongs to the LpxK family.

It catalyses the reaction a lipid A disaccharide + ATP = a lipid IVA + ADP + H(+). The protein operates within glycolipid biosynthesis; lipid IV(A) biosynthesis; lipid IV(A) from (3R)-3-hydroxytetradecanoyl-[acyl-carrier-protein] and UDP-N-acetyl-alpha-D-glucosamine: step 6/6. Transfers the gamma-phosphate of ATP to the 4'-position of a tetraacyldisaccharide 1-phosphate intermediate (termed DS-1-P) to form tetraacyldisaccharide 1,4'-bis-phosphate (lipid IVA). The polypeptide is Tetraacyldisaccharide 4'-kinase (Pseudomonas fluorescens (strain Pf0-1)).